The sequence spans 361 residues: Ribosomal RNA large subunit methyltransferase M (361 aa).

S-adenosyl-L-methionine-binding positions include S187, 220 to 223 (CPGG), D239, D259, and D276. K305 serves as the catalytic Proton acceptor.

This sequence belongs to the class I-like SAM-binding methyltransferase superfamily. RNA methyltransferase RlmE family. RlmM subfamily. Monomer.

The protein localises to the cytoplasm. It carries out the reaction cytidine(2498) in 23S rRNA + S-adenosyl-L-methionine = 2'-O-methylcytidine(2498) in 23S rRNA + S-adenosyl-L-homocysteine + H(+). Its function is as follows. Catalyzes the 2'-O-methylation at nucleotide C2498 in 23S rRNA. The chain is Ribosomal RNA large subunit methyltransferase M from Shewanella baltica (strain OS223).